The chain runs to 146 residues: uncharacterized protein (146 aa).

The interval 67–93 (DDNGMESGFCSGATSTGQSASTSPAPV) is disordered. Positions 77–92 (SGATSTGQSASTSPAP) are enriched in low complexity.

This is an uncharacterized protein from Caenorhabditis elegans.